The following is a 381-amino-acid chain: Curved DNA-binding protein (381 aa).

Phosphoserine is present on Ser-8. The residue at position 362 (Thr-362) is a Phosphothreonine. The Nuclear localization signal signature appears at 368 to 375; sequence KNKKKSKK.

The protein belongs to the peptidase M24 family.

It localises to the nucleus. Its function is as follows. A non-essential protein that preferentially binds curved DNA. Binds non-curved DNA with a much lower affinity. This is Curved DNA-binding protein (cdb4) from Schizosaccharomyces pombe (strain 972 / ATCC 24843) (Fission yeast).